We begin with the raw amino-acid sequence, 409 residues long: Putative lipoate-protein ligase A (409 aa).

The region spanning 146–330 (GPDNCRLVFY…RFQKTFKVDG (185 aa)) is the BPL/LPL catalytic domain. ATP contacts are provided by residues arginine 188, 193–196 (GTVL), and lysine 249. (R)-lipoate is bound at residue lysine 249.

The protein belongs to the LplA family. In terms of assembly, monomer.

It catalyses the reaction L-lysyl-[lipoyl-carrier protein] + (R)-lipoate + ATP = N(6)-[(R)-lipoyl]-L-lysyl-[lipoyl-carrier protein] + AMP + diphosphate + H(+). It participates in protein modification; protein lipoylation via exogenous pathway; protein N(6)-(lipoyl)lysine from lipoate: step 1/2. The protein operates within protein modification; protein lipoylation via exogenous pathway; protein N(6)-(lipoyl)lysine from lipoate: step 2/2. Functionally, catalyzes both the ATP-dependent activation of exogenously supplied lipoate to lipoyl-AMP and the transfer of the activated lipoyl onto the lipoyl domains of lipoate-dependent enzymes. This Saccharomyces cerevisiae (strain YJM789) (Baker's yeast) protein is Putative lipoate-protein ligase A (AIM22).